The chain runs to 164 residues: NADH-quinone oxidoreductase subunit I (164 aa).

4Fe-4S ferredoxin-type domains lie at 55–85 (LRRYPNGEERCIACKLCEAVCPAQAITIDAE) and 95–124 (TRYDIDMTKCIYCGFCQEACPVDAIVEGPN). Residues C65, C68, C71, C75, C104, C107, C110, and C114 each coordinate [4Fe-4S] cluster.

Belongs to the complex I 23 kDa subunit family. In terms of assembly, NDH-1 is composed of 14 different subunits. Subunits NuoA, H, J, K, L, M, N constitute the membrane sector of the complex. Requires [4Fe-4S] cluster as cofactor.

The protein localises to the cell inner membrane. The enzyme catalyses a quinone + NADH + 5 H(+)(in) = a quinol + NAD(+) + 4 H(+)(out). Functionally, NDH-1 shuttles electrons from NADH, via FMN and iron-sulfur (Fe-S) centers, to quinones in the respiratory chain. The immediate electron acceptor for the enzyme in this species is believed to be ubiquinone. Couples the redox reaction to proton translocation (for every two electrons transferred, four hydrogen ions are translocated across the cytoplasmic membrane), and thus conserves the redox energy in a proton gradient. The polypeptide is NADH-quinone oxidoreductase subunit I (Ruegeria sp. (strain TM1040) (Silicibacter sp.)).